The primary structure comprises 548 residues: Hydroxylamine reductase (548 aa).

Positions 3, 6, 15, and 21 each coordinate [4Fe-4S] cluster. Hybrid [4Fe-2O-2S] cluster is bound by residues histidine 239, glutamate 263, cysteine 307, cysteine 401, cysteine 429, cysteine 454, glutamate 489, and lysine 491. Cysteine 401 is modified (cysteine persulfide).

The protein belongs to the HCP family. It depends on [4Fe-4S] cluster as a cofactor. The cofactor is hybrid [4Fe-2O-2S] cluster.

It localises to the cytoplasm. The catalysed reaction is A + NH4(+) + H2O = hydroxylamine + AH2 + H(+). Functionally, catalyzes the reduction of hydroxylamine to form NH(3) and H(2)O. The polypeptide is Hydroxylamine reductase (Desulfosudis oleivorans (strain DSM 6200 / JCM 39069 / Hxd3) (Desulfococcus oleovorans)).